A 298-amino-acid polypeptide reads, in one-letter code: GTP cyclohydrolase FolE2 (298 aa).

It belongs to the GTP cyclohydrolase IV family.

It carries out the reaction GTP + H2O = 7,8-dihydroneopterin 3'-triphosphate + formate + H(+). Its pathway is cofactor biosynthesis; 7,8-dihydroneopterin triphosphate biosynthesis; 7,8-dihydroneopterin triphosphate from GTP: step 1/1. In terms of biological role, converts GTP to 7,8-dihydroneopterin triphosphate. This is GTP cyclohydrolase FolE2 from Azotobacter vinelandii (strain DJ / ATCC BAA-1303).